The chain runs to 823 residues: DNA topoisomerase 4 subunit A (823 aa).

Positions 30–496 constitute a Topo IIA-type catalytic domain; it reads LPDIRDGLKP…KAIEIDTASL (467 aa). Tyr-118 acts as the O-(5'-phospho-DNA)-tyrosine intermediate in catalysis.

The protein belongs to the type II topoisomerase GyrA/ParC subunit family. ParC type 2 subfamily. Heterotetramer composed of ParC and ParE.

It localises to the cell membrane. The catalysed reaction is ATP-dependent breakage, passage and rejoining of double-stranded DNA.. With respect to regulation, inhibited by quinolones, such as levofloxacin. Its function is as follows. Topoisomerase IV is essential for chromosome segregation. It relaxes supercoiled DNA. Performs the decatenation events required during the replication of a circular DNA molecule. The polypeptide is DNA topoisomerase 4 subunit A (Streptococcus pneumoniae serotype 4 (strain ATCC BAA-334 / TIGR4)).